The chain runs to 30 residues: GIPCGESCVWIPCISAAIGCSCKNKVCYRN.

The cyclopeptide (Gly-Asn) cross-link spans 1 to 30 (GIPCGESCVWIPCISAAIGCSCKNKVCYRN). 3 cysteine pairs are disulfide-bonded: cysteine 4-cysteine 20, cysteine 8-cysteine 22, and cysteine 13-cysteine 27.

In terms of processing, this is a cyclic peptide.

Its function is as follows. Probably participates in a plant defense mechanism. The protein is Cyclotide cycloviolacin O17 of Psychotria brachyceras.